The following is a 138-amino-acid chain: Large ribosomal subunit protein uL16 (138 aa).

A compositionally biased stretch (basic residues) spans 1 to 15 (MLSPRKVKYRKKQRG). A disordered region spans residues 1–20 (MLSPRKVKYRKKQRGRLSGE).

Belongs to the universal ribosomal protein uL16 family. Part of the 50S ribosomal subunit.

Binds 23S rRNA and is also seen to make contacts with the A and possibly P site tRNAs. The protein is Large ribosomal subunit protein uL16 of Borrelia turicatae (strain 91E135).